The following is a 313-amino-acid chain: Pantothenate synthetase (313 aa).

43-50 is a binding site for ATP; sequence MGALHEGH. H50 functions as the Proton donor in the catalytic mechanism. (R)-pantoate is bound at residue Q75. Q75 is a beta-alanine binding site. 161-164 provides a ligand contact to ATP; it reads GEKD. Q167 lines the (R)-pantoate pocket. ATP-binding positions include V190 and 198-201; that span reads LSSR.

Belongs to the pantothenate synthetase family. As to quaternary structure, homodimer.

The protein resides in the cytoplasm. The catalysed reaction is (R)-pantoate + beta-alanine + ATP = (R)-pantothenate + AMP + diphosphate + H(+). Its pathway is cofactor biosynthesis; (R)-pantothenate biosynthesis; (R)-pantothenate from (R)-pantoate and beta-alanine: step 1/1. Its function is as follows. Catalyzes the condensation of pantoate with beta-alanine in an ATP-dependent reaction via a pantoyl-adenylate intermediate. The protein is Pantothenate synthetase of Mycobacterium sp. (strain KMS).